A 347-amino-acid polypeptide reads, in one-letter code: Phosphate acyltransferase (347 aa).

Belongs to the PlsX family. As to quaternary structure, homodimer. Probably interacts with PlsY.

Its subcellular location is the cytoplasm. It carries out the reaction a fatty acyl-[ACP] + phosphate = an acyl phosphate + holo-[ACP]. The protein operates within lipid metabolism; phospholipid metabolism. Catalyzes the reversible formation of acyl-phosphate (acyl-PO(4)) from acyl-[acyl-carrier-protein] (acyl-ACP). This enzyme utilizes acyl-ACP as fatty acyl donor, but not acyl-CoA. This Anaplasma marginale (strain St. Maries) protein is Phosphate acyltransferase.